The primary structure comprises 633 residues: Heterogeneous nuclear ribonucleoprotein R (633 aa).

A disordered region spans residues 1 to 24; it reads MANQVNGNAVQLKEEEEPMDTSSV. Ala-2 carries the post-translational modification N-acetylalanine. Residues Lys-13 and Lys-171 each participate in a glycyl lysine isopeptide (Lys-Gly) (interchain with G-Cter in SUMO2) cross-link. RRM domains are found at residues 165 to 244, 246 to 328, and 341 to 411; these read TEVF…ISVA, NRLF…WADP, and KVLF…LAKP. Lys-359 participates in a covalent cross-link: Glycyl lysine isopeptide (Lys-Gly) (interchain with G-Cter in SUMO2). Lys-366 is subject to N6-acetyllysine. The Nuclear localization signal signature appears at 412–418; the sequence is PDKKRKE. The tract at residues 412–456 is disordered; the sequence is PDKKRKERQAARQASRSTAYEDYYYHPPPRMPPPIRGRGRGGGRG. Pro residues predominate over residues 437 to 446; that stretch reads HPPPRMPPPI. Residues 447–567 are RNA-binding RGG-box; the sequence is RGRGRGGGRG…SRGSRGNRGG (121 aa). One copy of the 1; approximate repeat lies at 462-471; sequence PDYYGYEDYY. The 3 X 11 AA approximate repeats of D-D-Y-Y-G-Y-D-Y-H-D-Y stretch occupies residues 462–497; that stretch reads PDYYGYEDYYDDYYGYDYHDYRGGYEDPYYGYDDGY. Repeat unit 2 spans residues 472–482; the sequence is DDYYGYDYHDY. The 3; approximate repeat unit spans residues 488-497; the sequence is DPYYGYDDGY. The segment covering 501–510 has biased composition (gly residues); that stretch reads GRGGGRGGRG. The tract at residues 501-633 is disordered; sequence GRGGGRGGRG…YQDTYGQQWK (133 aa). A compositionally biased stretch (pro residues) spans 511–524; sequence APPPPRGRGAPPPR. Residues 525 to 541 show a composition bias toward low complexity; sequence GRAGYSQRGAPLGPPRG. Gly residues predominate over residues 558-570; the sequence is SRGSRGNRGGNVG. Residues 588 to 604 are compositionally biased toward polar residues; it reads TNNQQNWGSQPIAQQPL. Low complexity predominate over residues 605–621; the sequence is QQGGDYSGNYGYNNDNQ. The segment covering 622-633 has biased composition (polar residues); sequence EFYQDTYGQQWK.

Identified in the spliceosome C complex. Identified in a IGF2BP1-dependent mRNP granule complex containing untranslated mRNAs. Interacts with GTPBP1.

The protein resides in the nucleus. It localises to the microsome. It is found in the nucleoplasm. The protein localises to the cytoplasm. In terms of biological role, component of ribonucleosomes, which are complexes of at least 20 other different heterogeneous nuclear ribonucleoproteins (hnRNP). hnRNP play an important role in processing of precursor mRNA in the nucleus. The chain is Heterogeneous nuclear ribonucleoprotein R (HNRNPR) from Homo sapiens (Human).